A 1690-amino-acid chain; its full sequence is DNA-directed RNA polymerase subunit beta' (1690 aa).

Zn(2+)-binding residues include C63, C65, C78, and C81. Positions 753, 755, and 757 each coordinate Mg(2+). Residues C1107, C1295, C1302, and C1305 each coordinate Zn(2+).

It belongs to the RNA polymerase beta' chain family. In terms of assembly, the RNAP catalytic core consists of 2 alpha, 1 beta, 1 beta' and 1 omega subunit. When a sigma factor is associated with the core the holoenzyme is formed, which can initiate transcription. Mg(2+) serves as cofactor. It depends on Zn(2+) as a cofactor.

It carries out the reaction RNA(n) + a ribonucleoside 5'-triphosphate = RNA(n+1) + diphosphate. DNA-dependent RNA polymerase catalyzes the transcription of DNA into RNA using the four ribonucleoside triphosphates as substrates. The sequence is that of DNA-directed RNA polymerase subunit beta' from Thermotoga maritima (strain ATCC 43589 / DSM 3109 / JCM 10099 / NBRC 100826 / MSB8).